The chain runs to 310 residues: Cytochrome P450 monooxygenase ppzG (310 aa).

Cysteine 288 contributes to the heme binding site.

It belongs to the cytochrome P450 family. Heme is required as a cofactor.

It participates in secondary metabolite biosynthesis. Functionally, cytochrome P450 monooxygenase; part of the gene cluster that mediates the biosynthesis of pyrrolopyrazines, secondary metabolites showing insecticidal activity. The role of ppzG within the pathway has still to be determined. The single multifunctional NRPS ppzA is sufficient to produce peramine via condensation of 1-pyrroline-5-carboxylate and arginine, N-methylation of the alpha-amino group of arginine and reduction of the thioester and the cyclization to form an iminium ion resulting in release from the peptide synthetase. Deprotonation of this intermediate and oxidation of the pyrroline ring would give rise to peramine. In Epichloe species that produce only peramine, the peramine synthetase gene is not localized in a gene cluster, in contrast to Metarhizium species that contain additional pyrrolopyrazine biosynthesis genes. The 2-oxoglutarate-Fe(II) type oxidoreductase ppzC hydroxylates peramine to yield the newly identified compound 8-hydroxyperamine whereas ppzD converts L-proline into trans-4-hydroxy-L-proline, a precursor of peramine biosynthesis. The sequence is that of Cytochrome P450 monooxygenase ppzG (ppzG) from Metarhizium majus (strain ARSEF 297).